The chain runs to 3677 residues: Dystrophin (3677 aa).

An actin-binding region spans residues 1–240; that stretch reads MLWWEEVEDC…YITSLFQVLP (240 aa). 2 Calponin-homology (CH) domains span residues 15 to 119 and 134 to 240; these read DVQK…LHWQ and TNSE…QVLP. An ANK2- and ANK-3 binding region spans residues 63–72; it reads PKEKGSTRVH. 23 Spectrin repeats span residues 342 to 447, 451 to 557, 560 to 668, 728 to 828, 831 to 935, 944 to 1046, 1049 to 1154, 1163 to 1264, 1268 to 1464, 1469 to 1569, 1573 to 1676, 1680 to 1777, 1779 to 1875, 1878 to 1980, 2001 to 2098, 2106 to 2209, 2215 to 2316, 2317 to 2415, 2465 to 2569, 2576 to 2678, 2682 to 2786, 2800 to 2922, and 2927 to 3032; these read LDSY…SNLH, MDLQ…LLQD, LKWQ…QISQ, DITE…NWLE, NNII…ELQT, RYQE…KLEE, NKLR…EALK, LQKD…TLEE, CWHE…LFQK, EQRL…QLEK, LSRK…NLLL, KHME…TGKA, IPLK…KALE, HQWY…TLHE, YLTE…ERQG, KWRH…RVEE, SEFQ…GELE, VHIK…LRTK, ADFN…QLNE, QWLE…ALEE, LLQQ…KKSL, KRLH…RKID, and RLQE…QLHE. The interaction with SYNM stretch occupies residues 1416-1914; it reads SDLTSHEISL…PEPRDERKIK (499 aa). The WW domain maps to 3047-3080; it reads TSVQGPWERAISPNKVPYYINHETQTTCWDHPKM. An interaction with SYNM region spans residues 3050–3400; it reads QGPWERAISP…TVLEGDNMET (351 aa). The segment at 3300 to 3356 adopts a ZZ-type; degenerate zinc-finger fold; that stretch reads KHQAKCNICKECPIIGFRYRSLKHFNYDICQSCFFSGRVAKGHKMHYPMVEYCTPTT. Zn(2+) contacts are provided by Cys3305, Cys3308, Cys3329, and Cys3332. Positions 3458 to 3510 are binds to SNTB1; it reads DDEHLLIQHYCQSLNQDSPLSQPRSPAQILISLESEERGELERILADLEEENR. Ser3475, Ser3482, and Ser3492 each carry phosphoserine. Disordered stretches follow at residues 3520–3546 and 3595–3677; these read KQQHEHKGLSPLPSPPEMMPTSPQSPR and EAKV…EDTM. Composition is skewed to polar residues over residues 3599 to 3618 and 3654 to 3664; these read NGTTVSSPSTSLQRSDSSQP and QLNNSFPSSRG. Phosphoserine is present on residues Ser3604, Ser3605, Ser3609, Ser3615, Ser3616, and Ser3658.

Interacts with SYNM. Interacts with the syntrophins SNTG1 and SNTG2. Interacts with KRT19. Component of the dystrophin-associated glycoprotein complex which is composed of three subcomplexes: a cytoplasmic complex comprised of DMD (or UTRN), DTNA and a number of syntrophins, such as SNTB1, SNTB2, SNTG1 and SNTG2, the transmembrane dystroglycan complex, and the sarcoglycan-sarcospan complex. Interacts with DAG1 (betaDAG1) with DMD; the interaction is inhibited by phosphorylation on the PPXY motif of DAG1. Interacts with SYNM; SNTA1 and SNTB1. Interacts with CMYA5. Directly interacts with ANK2 and ANK3; these interactions do not interfere with betaDAG1-binding and are necessary for proper localization in muscle cells. Identified in a dystroglycan complex that contains at least PRX, DRP2, UTRN, DMD and DAG1. Interacts with DTNB. Interacts with PGM5; the interaction is direct. Interacts with NOS1; localizes NOS1 to sarcolemma in muscle cells. Strongly expressed in skeletal muscle and weak expression observed in newborn brain which increases in adult brain.

It localises to the cell membrane. The protein resides in the sarcolemma. Its subcellular location is the cytoplasm. It is found in the cytoskeleton. The protein localises to the postsynaptic cell membrane. In terms of biological role, anchors the extracellular matrix to the cytoskeleton via F-actin. Ligand for dystroglycan. Component of the dystrophin-associated glycoprotein complex which accumulates at the neuromuscular junction (NMJ) and at a variety of synapses in the peripheral and central nervous systems and has a structural function in stabilizing the sarcolemma. Also implicated in signaling events and synaptic transmission. This is Dystrophin (Dmd) from Rattus norvegicus (Rat).